Reading from the N-terminus, the 332-residue chain is Hdr-like menaquinol oxidoreductase cytochrome b-like subunit (332 aa).

The next 5 membrane-spanning stretches (helical) occupy residues 3-23 (GVIF…IGVI), 97-117 (DARW…LVLI), 143-163 (VFIP…FLLW), 177-197 (LPSD…GNVM), and 230-250 (IEPI…YFPF).

Consists of five subunits: an integral membrane subunit, a cytochrome b-like subunit, a cytochrome c subunit and two iron-sulfur subunits.

The protein localises to the cell membrane. Functionally, has menaquinol-oxidizing activity. HmeC and HmeD subunits may together mediate electron transfer from menaquinol to an unidentified electron acceptor on the cytoplasmic side of the membrane. The protein is Hdr-like menaquinol oxidoreductase cytochrome b-like subunit (hmeC) of Archaeoglobus fulgidus (strain ATCC 49558 / DSM 4304 / JCM 9628 / NBRC 100126 / VC-16).